Consider the following 426-residue polypeptide: Divalent metal cation transporter MntH (426 aa).

10 consecutive transmembrane segments (helical) span residues 31–51 (WYLL…GNVA), 58–78 (AQFG…AGLV), 134–156 (ILFR…LLLM), 169–189 (VITG…FVAT), 208–228 (SVLL…VYLH), 256–276 (VILA…VAAI), 298–318 (LGAT…LASA), 337–357 (IPML…LALG), 363–383 (ALVL…LPLV), and 402–422 (TVLG…LIYL).

This sequence belongs to the NRAMP family.

It localises to the cell membrane. Its function is as follows. H(+)-stimulated, divalent metal cation uptake system. The sequence is that of Divalent metal cation transporter MntH from Mycobacterium leprae (strain TN).